The following is a 205-amino-acid chain: Large ribosomal subunit protein uL3c (205 aa).

The segment at 127 to 153 (HFSRGPMSHGSKNHRQPGSIGAGTTPG) is disordered.

It belongs to the universal ribosomal protein uL3 family. In terms of assembly, part of the 50S ribosomal subunit.

Its subcellular location is the plastid. The protein localises to the chloroplast. Functionally, one of the primary rRNA binding proteins, it binds directly near the 3'-end of the 23S rRNA, where it nucleates assembly of the 50S subunit. The chain is Large ribosomal subunit protein uL3c (rpl3) from Porphyra purpurea (Red seaweed).